A 428-amino-acid chain; its full sequence is Enolase (428 aa).

Q173 is a (2R)-2-phosphoglycerate binding site. E217 serves as the catalytic Proton donor. The Mg(2+) site is built by D253, E294, and D320. Residues K345, R374, S375, and K396 each coordinate (2R)-2-phosphoglycerate. The Proton acceptor role is filled by K345.

It belongs to the enolase family. Mg(2+) serves as cofactor.

It is found in the cytoplasm. It localises to the secreted. Its subcellular location is the cell surface. The enzyme catalyses (2R)-2-phosphoglycerate = phosphoenolpyruvate + H2O. It participates in carbohydrate degradation; glycolysis; pyruvate from D-glyceraldehyde 3-phosphate: step 4/5. Functionally, catalyzes the reversible conversion of 2-phosphoglycerate (2-PG) into phosphoenolpyruvate (PEP). It is essential for the degradation of carbohydrates via glycolysis. This Methanosarcina mazei (strain ATCC BAA-159 / DSM 3647 / Goe1 / Go1 / JCM 11833 / OCM 88) (Methanosarcina frisia) protein is Enolase.